The sequence spans 485 residues: Glutamyl-tRNA(Gln) amidotransferase subunit A (485 aa).

Catalysis depends on charge relay system residues K79 and S154. The active-site Acyl-ester intermediate is S178.

This sequence belongs to the amidase family. GatA subfamily. In terms of assembly, heterotrimer of A, B and C subunits.

It catalyses the reaction L-glutamyl-tRNA(Gln) + L-glutamine + ATP + H2O = L-glutaminyl-tRNA(Gln) + L-glutamate + ADP + phosphate + H(+). Functionally, allows the formation of correctly charged Gln-tRNA(Gln) through the transamidation of misacylated Glu-tRNA(Gln) in organisms which lack glutaminyl-tRNA synthetase. The reaction takes place in the presence of glutamine and ATP through an activated gamma-phospho-Glu-tRNA(Gln). This Staphylococcus haemolyticus (strain JCSC1435) protein is Glutamyl-tRNA(Gln) amidotransferase subunit A.